The sequence spans 130 residues: MASVDVSQNTSDINFSVSAADKVAELIKEEDNSDLNLRVSITGGGCSGFQYGFSFDEQINDDDTVIIQQCSDGKSSVKLLIDSMSYQYLHDAEIDYIKGIQGEQFVIRNPNAKTTCGCGSSFSIGDEDDL.

C46, C116, and C118 together coordinate iron-sulfur cluster.

It belongs to the HesB/IscA family. Homodimer. The cofactor is iron-sulfur cluster.

Functionally, required for insertion of 4Fe-4S clusters for at least IspG. The polypeptide is Iron-sulfur cluster insertion protein ErpA (Legionella pneumophila (strain Lens)).